Consider the following 396-residue polypeptide: 1-deoxy-D-xylulose 5-phosphate reductoisomerase (396 aa).

NADPH-binding residues include threonine 15, glycine 16, serine 17, isoleucine 18, glycine 41, and asparagine 130. Residue lysine 131 participates in 1-deoxy-D-xylulose 5-phosphate binding. Residue glutamate 132 participates in NADPH binding. Aspartate 155 contacts Mn(2+). 1-deoxy-D-xylulose 5-phosphate is bound by residues serine 156, glutamate 157, serine 181, and histidine 204. Glutamate 157 provides a ligand contact to Mn(2+). An NADPH-binding site is contributed by glycine 210. Positions 217, 222, 223, and 226 each coordinate 1-deoxy-D-xylulose 5-phosphate. A Mn(2+)-binding site is contributed by glutamate 226.

Belongs to the DXR family. The cofactor is Mg(2+). Mn(2+) is required as a cofactor.

It catalyses the reaction 2-C-methyl-D-erythritol 4-phosphate + NADP(+) = 1-deoxy-D-xylulose 5-phosphate + NADPH + H(+). It functions in the pathway isoprenoid biosynthesis; isopentenyl diphosphate biosynthesis via DXP pathway; isopentenyl diphosphate from 1-deoxy-D-xylulose 5-phosphate: step 1/6. In terms of biological role, catalyzes the NADPH-dependent rearrangement and reduction of 1-deoxy-D-xylulose-5-phosphate (DXP) to 2-C-methyl-D-erythritol 4-phosphate (MEP). This chain is 1-deoxy-D-xylulose 5-phosphate reductoisomerase, found in Bifidobacterium longum (strain NCC 2705).